The primary structure comprises 413 residues: Zinc finger protein 821 (413 aa).

Residues 26–83 (RQAMMKTDFPGDLGSQRQAIQQLRDQDSSSSDSEGDEEETTQDEVSSHTSEEDGGVVK) form a disordered region. Over residues 58–67 (SEGDEEETTQ) the composition is skewed to acidic residues. 2 consecutive C2H2-type zinc fingers follow at residues 117–141 (QLCQCPLCQLDCGSREQLIAHVYQH) and 151–173 (YMCPVCGRALSSPGSLGRHLLIH). Residues 260–367 (ALRRQNEPLE…EKMDMMLRAQ (108 aa)) are a coiled coil. The segment at 279 to 320 (RTAKKSRRDNETPEEREVRRMRDREAKRLQRMQETDEQRARR) is disordered.

The protein belongs to the krueppel C2H2-type zinc-finger protein family.

It is found in the nucleus. Functionally, may be involved in transcriptional regulation. The polypeptide is Zinc finger protein 821 (Znf821) (Mus musculus (Mouse)).